We begin with the raw amino-acid sequence, 120 residues long: Ribonuclease P protein component (120 aa).

Belongs to the RnpA family. As to quaternary structure, consists of a catalytic RNA component (M1 or rnpB) and a protein subunit.

The catalysed reaction is Endonucleolytic cleavage of RNA, removing 5'-extranucleotides from tRNA precursor.. Functionally, RNaseP catalyzes the removal of the 5'-leader sequence from pre-tRNA to produce the mature 5'-terminus. It can also cleave other RNA substrates such as 4.5S RNA. The protein component plays an auxiliary but essential role in vivo by binding to the 5'-leader sequence and broadening the substrate specificity of the ribozyme. This Rickettsia bellii (strain RML369-C) protein is Ribonuclease P protein component.